Here is a 222-residue protein sequence, read N- to C-terminus: Octanoyltransferase (222 aa).

Positions 34 to 214 constitute a BPL/LPL catalytic domain; sequence GEAPSTVLLL…EFRKHEEALV (181 aa). Substrate is bound by residues 72–79, 144–146, and 157–159; these read RGGKLTWH, AIG, and GVA. The active-site Acyl-thioester intermediate is the Cys175.

The protein belongs to the LipB family.

It localises to the cytoplasm. The enzyme catalyses octanoyl-[ACP] + L-lysyl-[protein] = N(6)-octanoyl-L-lysyl-[protein] + holo-[ACP] + H(+). Its pathway is protein modification; protein lipoylation via endogenous pathway; protein N(6)-(lipoyl)lysine from octanoyl-[acyl-carrier-protein]: step 1/2. In terms of biological role, catalyzes the transfer of endogenously produced octanoic acid from octanoyl-acyl-carrier-protein onto the lipoyl domains of lipoate-dependent enzymes. Lipoyl-ACP can also act as a substrate although octanoyl-ACP is likely to be the physiological substrate. In Pseudarthrobacter chlorophenolicus (strain ATCC 700700 / DSM 12829 / CIP 107037 / JCM 12360 / KCTC 9906 / NCIMB 13794 / A6) (Arthrobacter chlorophenolicus), this protein is Octanoyltransferase.